A 245-amino-acid polypeptide reads, in one-letter code: Transmembrane and ubiquitin-like domain-containing protein 1 (245 aa).

The required to release iHOPS from membranes stretch occupies residues 2–30; sequence ALIEGVGDEVTVLFAVLACLLVLALAWVS. The helical transmembrane segment at 11–31 threads the bilayer; it reads VTVLFAVLACLLVLALAWVST. Residues 33-100 form a disordered region; the sequence is TTESTDPQPQ…ASTPPDSPQE (68 aa). Phosphoserine is present on residues Ser-73, Ser-97, and Ser-126. Positions 102–175 constitute a Ubiquitin-like domain; sequence LLLRLKFLND…LHCHVSTRVG (74 aa). 2 helical membrane passes run 194-214 and 219-239; these read IGSLLLPLLLLLLLLLWYCQI and FFPLTATLGLAGFTLLLSLLA.

Interacts with EEF1A1, CAMLG, GRIA2 and GRIP1. Interacts with NPM1 and CDKN2A; TMUB1 can enhance interaction between NPM1 and CDKN2A and is proposed to bridge the proteins; proposed to be mediated by iHOPS. Interacts with TUBG1. Interacts with ERLIN2 and AMFR; TMUB1 promotes the interaction of ERLIN2 with AMFR. In terms of processing, isoform 1 (lHOPS) is processed by regulated intramembrane proteolysis (RIP) in the N-terminus to release iHOPS from membranes. Post-translationally, isoform 2 seems to undergo a selective cleavage in the C-terminal region to release an additional cytoplasmic form. In terms of tissue distribution, expressed in adult brain; at protein level. Isoform 1 (lHOPS) is highly expressed in small intestine, stomach and epididymis. Isoform 2 (sHOPS) and iHOPS are abundantly expressed in brain, liver and adrenal gland.

It is found in the membrane. The protein localises to the postsynaptic cell membrane. Its subcellular location is the recycling endosome. The protein resides in the cytoplasm. It localises to the nucleus. It is found in the nucleolus. The protein localises to the cytoskeleton. Its subcellular location is the microtubule organizing center. The protein resides in the centrosome. Functionally, involved in sterol-regulated ubiquitination and degradation of HMG-CoA reductase HMGCR. Involved in positive regulation of AMPA-selective glutamate receptor GRIA2 recycling to the cell surface. Acts as a negative regulator of hepatocyte growth during regeneration. May contribute to the regulation of translation during cell-cycle progression. May contribute to the regulation of cell proliferation. May be involved in centrosome assembly. Modulates stabilization and nucleolar localization of tumor suppressor CDKN2A and enhances association between CDKN2A and NPM1. This is Transmembrane and ubiquitin-like domain-containing protein 1 (Tmub1) from Mus musculus (Mouse).